The sequence spans 765 residues: MKGRGTHAMSSKKNNLPKNVSVEMVDPDAGIWEATATIDNGDFGSRTLRFETGLLARQADGAVTAYLDEDTILLSTTTASRSPREGIDFFPLTVDVEERMYSAGRIPGSFFRREGRPGTDAILAARLIDRPLRPTFVKGLRNEVQVVITVMSIDPNEMYDVLAINGASASTQLSGLPVSSSVGGVRMALVVDEEHPEGQWVAFPTREQVSQSVFELVVAGRVTEPAKGGRGKKSQPNVAVMMVEAGATDNVVERIAEGAPAPTEAVVAEGIEAAKPFIATLCAAQDALRDAVDTESREFELFPPFDEDVYSAVEAECDADVAQIMTIADKQERDESLAENMQETVDALIEQFPERESEIRAAHNDLTRTIVRQRILEDGFRIDGRDHTSIRDLGIVVQLLPRAHGSALFERGETQILGVTTLDTLKMEQTIDSLGPETSKRYIHHYNFPPYSTGETGRVGSPKRREIGHGALAERALTPVLPSREEFPYTIRQVSEALGSNGSTSMGSVCASTLSLYNAGVPLKAPVAGIAMGLVSGLVDGKEKFVSLTDILGAEDAFGDMDFKVAGTSEYVTALQLDTKLDGLPSEVLASALGQARSARLEILQLMEDAIDAPDQMSELAPRITKISIPQNKIGEVIGPKGKTINQITEETGANISIEDDGTVFVSAVGGEAAEAAIEKINAIANPQQPKVGDRFLGTVVKTTAFGAFISLLPGRDGLLHISNIGGDRRIEKVEDELNVGDKIQVEIADIDNRGKISLVPVDED.

2 residues coordinate Mg(2+): Asp556 and Asp562. Residues 622–681 (PRITKISIPQNKIGEVIGPKGKTINQITEETGANISIEDDGTVFVSAVGGEAAEAAIEKI) enclose the KH domain. An S1 motif domain is found at 693–762 (GDRFLGTVVK…NRGKISLVPV (70 aa)).

Belongs to the polyribonucleotide nucleotidyltransferase family. It depends on Mg(2+) as a cofactor.

The protein resides in the cytoplasm. The enzyme catalyses RNA(n+1) + phosphate = RNA(n) + a ribonucleoside 5'-diphosphate. Functionally, involved in mRNA degradation. Catalyzes the phosphorolysis of single-stranded polyribonucleotides processively in the 3'- to 5'-direction. This chain is Polyribonucleotide nucleotidyltransferase, found in Corynebacterium urealyticum (strain ATCC 43042 / DSM 7109).